Here is a 355-residue protein sequence, read N- to C-terminus: Uroporphyrinogen decarboxylase (355 aa).

Substrate is bound by residues 36-40 (RQAGR), aspartate 85, tyrosine 160, serine 215, and histidine 334.

Belongs to the uroporphyrinogen decarboxylase family. In terms of assembly, homodimer.

It localises to the cytoplasm. The enzyme catalyses uroporphyrinogen III + 4 H(+) = coproporphyrinogen III + 4 CO2. It functions in the pathway porphyrin-containing compound metabolism; protoporphyrin-IX biosynthesis; coproporphyrinogen-III from 5-aminolevulinate: step 4/4. Functionally, catalyzes the decarboxylation of four acetate groups of uroporphyrinogen-III to yield coproporphyrinogen-III. This chain is Uroporphyrinogen decarboxylase, found in Rhodococcus jostii (strain RHA1).